We begin with the raw amino-acid sequence, 412 residues long: Argininosuccinate synthase (412 aa).

An ATP-binding site is contributed by 8–16 (AYSGGLDTS). Tyr-87 lines the L-citrulline pocket. An ATP-binding site is contributed by Gly-117. Residues Thr-119, Asn-123, and Asp-124 each coordinate L-aspartate. An L-citrulline-binding site is contributed by Asn-123. The L-citrulline site is built by Arg-127, Ser-175, Glu-259, and Tyr-271.

Belongs to the argininosuccinate synthase family. Type 1 subfamily. As to quaternary structure, homotetramer.

The protein localises to the cytoplasm. The catalysed reaction is L-citrulline + L-aspartate + ATP = 2-(N(omega)-L-arginino)succinate + AMP + diphosphate + H(+). The protein operates within amino-acid biosynthesis; L-arginine biosynthesis; L-arginine from L-ornithine and carbamoyl phosphate: step 2/3. The sequence is that of Argininosuccinate synthase from Clavibacter michiganensis subsp. michiganensis (strain NCPPB 382).